Consider the following 752-residue polypeptide: ATP-dependent RNA helicase DRS1 (752 aa).

2 disordered regions span residues 1–61 (MVVG…NLDE) and 119–223 (GLVK…TEGD). The segment covering 19 to 34 (DSEDDVPILDSSDDEK) has biased composition (acidic residues). Over residues 40 to 51 (TTKKRKGKNNKK) the composition is skewed to basic residues. The segment covering 124–142 (AHIDSKQEEETEKEKVEKE) has biased composition (basic and acidic residues). Acidic residues-rich tracts occupy residues 167 to 191 (NQSEEEEEEEEKEEEEEEEEEQEEM) and 200 to 209 (DEIDEEDDSE). Residue Ser-208 is modified to Phosphoserine. The Q motif motif lies at 231 to 259 (ENFNSLSLSRPVLKGLASLGYVKPSPIQS). Residues 262–437 (IPIALLGKDI…SLSLKKPVRI (176 aa)) form the Helicase ATP-binding domain. Position 275-282 (275-282 (AVTGSGKT)) interacts with ATP. The DEAD box signature appears at 385 to 388 (DEAD). The region spanning 448-639 (KLTQEFVRIR…SMNDTIEDIL (192 aa)) is the Helicase C-terminal domain. A coiled-coil region spans residues 621 to 667 (IEETNKLVESMNDTIEDILVEEKEEKEILRAEMQLRKGENMLKHKKE). The segment at 673-752 (RRTWFQSESD…NKKKGFKSRR (80 aa)) is disordered. Residues 694–705 (RNKKVTNSKKRK) show a composition bias toward basic residues. The span at 722-734 (TKTDRIADQERTF) shows a compositional bias: basic and acidic residues. The segment covering 735–752 (KKQKSTNSNKKKGFKSRR) has biased composition (basic residues).

It belongs to the DEAD box helicase family. DDX27/DRS1 subfamily. In terms of assembly, interacts with RRP1 and associates with pre-ribosomal particles.

The protein localises to the nucleus. Its subcellular location is the nucleolus. It carries out the reaction ATP + H2O = ADP + phosphate + H(+). In terms of biological role, ATP-binding RNA helicase involved in ribosome assembly. This chain is ATP-dependent RNA helicase DRS1 (DRS1), found in Saccharomyces cerevisiae (strain ATCC 204508 / S288c) (Baker's yeast).